We begin with the raw amino-acid sequence, 78 residues long: Acyl carrier protein (78 aa).

Positions 2–77 constitute a Carrier domain; sequence SDIASRVKAI…QAISYIEEAK (76 aa). Residue serine 37 is modified to O-(pantetheine 4'-phosphoryl)serine.

Belongs to the acyl carrier protein (ACP) family. Post-translationally, 4'-phosphopantetheine is transferred from CoA to a specific serine of apo-ACP by AcpS. This modification is essential for activity because fatty acids are bound in thioester linkage to the sulfhydryl of the prosthetic group.

The protein localises to the cytoplasm. Its pathway is lipid metabolism; fatty acid biosynthesis. Functionally, carrier of the growing fatty acid chain in fatty acid biosynthesis. This Flavobacterium johnsoniae (strain ATCC 17061 / DSM 2064 / JCM 8514 / BCRC 14874 / CCUG 350202 / NBRC 14942 / NCIMB 11054 / UW101) (Cytophaga johnsonae) protein is Acyl carrier protein.